The following is a 275-amino-acid chain: NH(3)-dependent NAD(+) synthetase (275 aa).

An ATP-binding site is contributed by 50-57 (GISGGVDS). Position 56 (Asp56) interacts with Mg(2+). Arg147 serves as a coordination point for deamido-NAD(+). Thr167 contacts ATP. Glu172 contacts Mg(2+). Residues Lys180 and Asp187 each contribute to the deamido-NAD(+) site. ATP contacts are provided by Lys196 and Thr218. 267–268 (HK) serves as a coordination point for deamido-NAD(+).

Belongs to the NAD synthetase family. As to quaternary structure, homodimer.

The enzyme catalyses deamido-NAD(+) + NH4(+) + ATP = AMP + diphosphate + NAD(+) + H(+). The protein operates within cofactor biosynthesis; NAD(+) biosynthesis; NAD(+) from deamido-NAD(+) (ammonia route): step 1/1. Catalyzes the ATP-dependent amidation of deamido-NAD to form NAD. Uses ammonia as a nitrogen source. The sequence is that of NH(3)-dependent NAD(+) synthetase from Pseudomonas putida (strain ATCC 700007 / DSM 6899 / JCM 31910 / BCRC 17059 / LMG 24140 / F1).